The primary structure comprises 23 residues: Paralytic peptide 1 (23 aa).

An intrachain disulfide couples C7 to C19.

It belongs to the GBP/PSP1/paralytic peptide family. As to expression, hemolymph.

Causes rapid, rigid paralysis when injected into Lepidopteran larvae. The physiological role may be to reduce hemolymph loss following injury and promote wound healing. The chain is Paralytic peptide 1 from Manduca sexta (Tobacco hawkmoth).